The sequence spans 225 residues: Urease accessory protein UreF (225 aa).

This sequence belongs to the UreF family. As to quaternary structure, ureD, UreF and UreG form a complex that acts as a GTP-hydrolysis-dependent molecular chaperone, activating the urease apoprotein by helping to assemble the nickel containing metallocenter of UreC. The UreE protein probably delivers the nickel.

Its subcellular location is the cytoplasm. Required for maturation of urease via the functional incorporation of the urease nickel metallocenter. In Thermosynechococcus vestitus (strain NIES-2133 / IAM M-273 / BP-1), this protein is Urease accessory protein UreF.